A 557-amino-acid polypeptide reads, in one-letter code: Fanconi anemia group C protein homolog (557 aa).

In terms of assembly, belongs to the multisubunit FA complex composed of FANCA, FANCB, FANCC, FANCE, FANCF, FANCG, FANCL/PHF9 and FANCM. This complex may also include HSP70. Interacts with ZBTB32. Upon IFNG induction, interacts with STAT1. Interacts with CDK1. Interacts with EIF2AK2.

The protein localises to the nucleus. It localises to the cytoplasm. Functionally, DNA repair protein that may operate in a postreplication repair or a cell cycle checkpoint function. May be implicated in interstrand DNA cross-link repair and in the maintenance of normal chromosome stability. Upon IFNG induction, may facilitate STAT1 activation by recruiting STAT1 to IFNGR1. The chain is Fanconi anemia group C protein homolog (Fancc) from Rattus norvegicus (Rat).